Reading from the N-terminus, the 142-residue chain is Transcriptional regulator MraZ (142 aa).

SpoVT-AbrB domains follow at residues 5-47 and 76-119; these read EYQH…PLDE and ACEV…SKEK.

It belongs to the MraZ family. Forms oligomers.

The protein localises to the cytoplasm. The protein resides in the nucleoid. This is Transcriptional regulator MraZ from Clostridium beijerinckii (strain ATCC 51743 / NCIMB 8052) (Clostridium acetobutylicum).